Consider the following 447-residue polypeptide: Na(+)-translocating NADH-quinone reductase subunit A (447 aa).

Belongs to the NqrA family. Composed of six subunits; NqrA, NqrB, NqrC, NqrD, NqrE and NqrF.

The catalysed reaction is a ubiquinone + n Na(+)(in) + NADH + H(+) = a ubiquinol + n Na(+)(out) + NAD(+). Its function is as follows. NQR complex catalyzes the reduction of ubiquinone-1 to ubiquinol by two successive reactions, coupled with the transport of Na(+) ions from the cytoplasm to the periplasm. NqrA to NqrE are probably involved in the second step, the conversion of ubisemiquinone to ubiquinol. This is Na(+)-translocating NADH-quinone reductase subunit A from Haemophilus influenzae (strain 86-028NP).